The sequence spans 328 residues: Ankyrin repeat domain-containing protein 2 (328 aa).

The residue at position 36 (serine 36) is a Phosphoserine. Serine 68 bears the Phosphoserine; by PKB/AKT2 mark. The interval 96–116 (RDALAAAQEPPPEPEEITGPV) is disordered. ANK repeat units follow at residues 116–145 (VNEE…SADT), 149–178 (FRRT…TVDF), 182–211 (LDCT…DTNV), 215–244 (LLST…DINA), and 248–277 (EGDS…DMMA). A disordered region spans residues 297–328 (RHALEHPEPESEQNGLERPGSGRETPQPIPAQ).

In terms of assembly, interacts with ID3; both proteins cooperate in myoblast differentiation. Interacts with TTN/titin. Interacts (via ANK repeats) with TCAP; the interaction is direct. Interacts with TJP1 (via PDZ domains). Interacts with PML; the interaction is direct. Interacts with p53/TP53. Interacts with YBX1. Interacts with AKT2. Phosphorylation at Ser-68 by PKB/AKT2 in response to oxidative stress induces translocation to the nucleus and negatively regulates myoblast differentiation. In terms of tissue distribution, expressed by myoblasts (at protein level). Expressed in skeletal and cardiac muscles.

The protein resides in the cytoplasm. Its subcellular location is the myofibril. It is found in the sarcomere. It localises to the i band. The protein localises to the cytosol. The protein resides in the nucleus. Its subcellular location is the PML body. In terms of biological role, functions as a negative regulator of myocyte differentiation. May interact with both sarcoplasmic structural proteins and nuclear proteins to regulate gene expression during muscle development and in response to muscle stress. The sequence is that of Ankyrin repeat domain-containing protein 2 (Ankrd2) from Mus musculus (Mouse).